The primary structure comprises 325 residues: Tetraacyldisaccharide 4'-kinase (325 aa).

Residue 55 to 62 (TAGGNGKT) coordinates ATP.

The protein belongs to the LpxK family.

The catalysed reaction is a lipid A disaccharide + ATP = a lipid IVA + ADP + H(+). Its pathway is glycolipid biosynthesis; lipid IV(A) biosynthesis; lipid IV(A) from (3R)-3-hydroxytetradecanoyl-[acyl-carrier-protein] and UDP-N-acetyl-alpha-D-glucosamine: step 6/6. Transfers the gamma-phosphate of ATP to the 4'-position of a tetraacyldisaccharide 1-phosphate intermediate (termed DS-1-P) to form tetraacyldisaccharide 1,4'-bis-phosphate (lipid IVA). This is Tetraacyldisaccharide 4'-kinase from Salmonella enteritidis PT4 (strain P125109).